A 179-amino-acid polypeptide reads, in one-letter code: GTP-dependent dephospho-CoA kinase (179 aa).

GTP-binding residues include Asp43, Val45, Asp62, Glu120, and Asp143.

The protein belongs to the GTP-dependent DPCK family.

The enzyme catalyses 3'-dephospho-CoA + GTP = GDP + CoA + H(+). Its pathway is cofactor biosynthesis; coenzyme A biosynthesis. Catalyzes the GTP-dependent phosphorylation of the 3'-hydroxyl group of dephosphocoenzyme A to form coenzyme A (CoA). This Haloarcula marismortui (strain ATCC 43049 / DSM 3752 / JCM 8966 / VKM B-1809) (Halobacterium marismortui) protein is GTP-dependent dephospho-CoA kinase.